A 622-amino-acid polypeptide reads, in one-letter code: Telomerase-associated protein of 75 kDa (622 aa).

In terms of assembly, component of the telomerase holoenzyme complex, composed of the catalytic core (the catalytic subunit TERT, the telomerase RNA template component TER and TAP65/p65), which is associated with two heterotrimeric subcomplexes: (i) the replication protein A (RPA)-related subcomplex, composed of TEB1, RPA2/TEB2 and RPA3/TEB3 and (ii) the CST-like subcomplex, composed of TAP75/p75, TAP45/p45 and TAP19/p19. TEB1 and the CST-like subcomplex are tethered to the catalytic core by TAP50/p50.

The protein localises to the chromosome. It localises to the telomere. In terms of biological role, component of a CST-like subcomplex of the holoenzyme telomerase ribonucleoprotein complex, which stimulates telomerase complementary-strand synthesis. Telomerase is an essential ribonucleoprotein enzyme that copies new telomeric repeats onto chromosome ends by repetitively synthesizing the short telomere-repeat sequence 5'-TTGGGG-3' using an RNA template component TER. The CST-like subcomplex (also named 7-4-1) binds telomeric single-stranded DNA and coordinates telomere G-strand and C-strand synthesis. The polypeptide is Telomerase-associated protein of 75 kDa (Tetrahymena thermophila (strain SB210)).